Consider the following 309-residue polypeptide: Homoserine O-succinyltransferase (309 aa).

Cysteine 142 acts as the Acyl-thioester intermediate in catalysis. Substrate is bound by residues lysine 163 and serine 192. The active-site Proton acceptor is the histidine 235. Residue glutamate 237 is part of the active site. Position 249 (arginine 249) interacts with substrate.

This sequence belongs to the MetA family.

It is found in the cytoplasm. The catalysed reaction is L-homoserine + succinyl-CoA = O-succinyl-L-homoserine + CoA. It participates in amino-acid biosynthesis; L-methionine biosynthesis via de novo pathway; O-succinyl-L-homoserine from L-homoserine: step 1/1. In terms of biological role, transfers a succinyl group from succinyl-CoA to L-homoserine, forming succinyl-L-homoserine. This is Homoserine O-succinyltransferase from Yersinia pseudotuberculosis serotype O:1b (strain IP 31758).